The sequence spans 189 residues: Chitin synthase 1 (189 aa).

Belongs to the chitin synthase family.

The protein localises to the cell membrane. The catalysed reaction is [(1-&gt;4)-N-acetyl-beta-D-glucosaminyl](n) + UDP-N-acetyl-alpha-D-glucosamine = [(1-&gt;4)-N-acetyl-beta-D-glucosaminyl](n+1) + UDP + H(+). Its function is as follows. Polymerizes chitin, a structural polymer of the cell wall and septum, by transferring the sugar moiety of UDP-GlcNAc to the non-reducing end of the growing chitin polymer. This is Chitin synthase 1 (CHS1) from Schizophyllum commune (Split gill fungus).